An 88-amino-acid polypeptide reads, in one-letter code: uncharacterized protein (88 aa).

A run of 3 helical transmembrane segments spans residues 3–23 (VFIL…CSVA), 33–53 (VAPG…AFTA), and 61–81 (FIGG…PFFF).

It is found in the cell membrane. This is an uncharacterized protein from Bacillus subtilis (strain 168).